A 311-amino-acid chain; its full sequence is tRNA dimethylallyltransferase (311 aa).

14-21 (GPTAVGKT) lines the ATP pocket. 16-21 (TAVGKT) is a substrate binding site. The interval 39 to 42 (DSMQ) is interaction with substrate tRNA.

It belongs to the IPP transferase family. Monomer. It depends on Mg(2+) as a cofactor.

It carries out the reaction adenosine(37) in tRNA + dimethylallyl diphosphate = N(6)-dimethylallyladenosine(37) in tRNA + diphosphate. Functionally, catalyzes the transfer of a dimethylallyl group onto the adenine at position 37 in tRNAs that read codons beginning with uridine, leading to the formation of N6-(dimethylallyl)adenosine (i(6)A). This Lactiplantibacillus plantarum (strain ATCC BAA-793 / NCIMB 8826 / WCFS1) (Lactobacillus plantarum) protein is tRNA dimethylallyltransferase.